A 432-amino-acid chain; its full sequence is Trigger factor (432 aa).

One can recognise a PPIase FKBP-type domain in the interval 161-246 (GKRVSIDFVG…VNKVEARQLP (86 aa)).

It belongs to the FKBP-type PPIase family. Tig subfamily.

It is found in the cytoplasm. The catalysed reaction is [protein]-peptidylproline (omega=180) = [protein]-peptidylproline (omega=0). Involved in protein export. Acts as a chaperone by maintaining the newly synthesized protein in an open conformation. Functions as a peptidyl-prolyl cis-trans isomerase. This is Trigger factor from Vibrio vulnificus (strain CMCP6).